Consider the following 180-residue polypeptide: uncharacterized protein (180 aa).

The tract at residues 138–180 is disordered; the sequence is SVMPVPMPQQNSDNGSTPHIVDSSKSKDKSSNDGDNGVFTGDE. Over residues 145 to 154 the composition is skewed to polar residues; the sequence is PQQNSDNGST. Positions 159–169 are enriched in basic and acidic residues; it reads DSSKSKDKSSN.

This is an uncharacterized protein from Acidianus filamentous virus 2 (isolate Italy/Pozzuoli) (AFV-2).